The following is a 145-amino-acid chain: uncharacterized protein (145 aa).

This is an uncharacterized protein from Frog virus 3 (isolate Goorha) (FV-3).